The chain runs to 320 residues: Polynucleotide 5'-triphosphatase CTL1 (320 aa).

Positions 1–12 (MSDQPETPSNSR) are enriched in polar residues. The tract at residues 1–23 (MSDQPETPSNSRNSHENVGAKKA) is disordered. Positions 13-23 (NSHENVGAKKA) are enriched in basic and acidic residues.

It belongs to the fungal TPase family. It depends on Mg(2+) as a cofactor. Requires Mn(2+) as cofactor.

The protein localises to the cytoplasm. It is found in the nucleus. It catalyses the reaction a 5'-end triphospho-ribonucleoside in mRNA + H2O = a 5'-end diphospho-ribonucleoside in mRNA + phosphate + H(+). In terms of biological role, probably involved in an RNA processing event other than mRNA capping. Releases gamma-phosphate from the 5'-end of RNA to produce a diphosphate terminus. The polypeptide is Polynucleotide 5'-triphosphatase CTL1 (Saccharomyces cerevisiae (strain ATCC 204508 / S288c) (Baker's yeast)).